We begin with the raw amino-acid sequence, 67 residues long: Conotoxin mr3d (67 aa).

A signal peptide spans 1 to 19 (MSKLGILLTICLLLFPLTA). Residues 20 to 52 (VPLDGDQPADRPAERMQDDISSEHHPFFDPVKR) constitute a propeptide that is removed on maturation. Intrachain disulfides connect C53–C65, C54–C62, and C58–C66. The residue at position 64 (P64) is a 4-hydroxyproline; partial. C66 is modified (cysteine amide; partial).

This sequence belongs to the conotoxin M superfamily. Has been found to be hydroxylated and amidated by Han et al. (2006), and to be unmodified by Ju et al. (2022). As to expression, expressed by the venom duct.

The protein localises to the secreted. The protein is Conotoxin mr3d of Conus marmoreus (Marble cone).